The primary structure comprises 311 residues: GTPase Era (311 aa).

Residues His-16 to Glu-188 form the Era-type G domain. The segment at Gly-24–Ser-31 is G1. Gly-24–Ser-31 is a GTP binding site. The tract at residues Gln-50 to Arg-54 is G2. Residues Asp-71–Gly-74 are G3. GTP-binding positions include Asp-71–Leu-75 and Asn-133–Asp-136. The interval Asn-133 to Asp-136 is G4. Residues Leu-166 to Ala-168 are G5. The KH type-2 domain maps to Leu-219–Pro-296.

This sequence belongs to the TRAFAC class TrmE-Era-EngA-EngB-Septin-like GTPase superfamily. Era GTPase family. As to quaternary structure, monomer.

It localises to the cytoplasm. It is found in the cell membrane. Its function is as follows. An essential GTPase that binds both GDP and GTP, with rapid nucleotide exchange. Plays a role in 16S rRNA processing and 30S ribosomal subunit biogenesis and possibly also in cell cycle regulation and energy metabolism. This is GTPase Era from Deinococcus radiodurans (strain ATCC 13939 / DSM 20539 / JCM 16871 / CCUG 27074 / LMG 4051 / NBRC 15346 / NCIMB 9279 / VKM B-1422 / R1).